Consider the following 583-residue polypeptide: MNNPQLTTVWSSVMVEELIRQGASFFCISPGSRSTPLTAAIARNPEASWKMFPDERSAGFFALGHARATGFPAVLVCTSGTAVANYLPAVVEASNDRIPMLILSADRPFELRECGANQTIRQNGIFGTFTRWQMELPEPSTSIPLQSLLSTIAHGVEKSLNSPRGPVHLNQPFREPFEPESCSTPEPWLEPLQAWQTGRRPSTVAAQPEKHPDMDSMRTLRELTGNARQPLIIAGNSTDENDSHAIAELADDLQVPLYADMTSGLRFSSSILPWQQAFASPEFRNAFRPDLVIHFGGGLISRHPSDALKQWKPDHLAVIRNHPGRYSPDHSVTLSIEASLRLTADALRGCRTGASALMAPAKRFFTEADREIAAATAPDLPVSEIGTARIVSELLPPDHLLFLSNSMPVRAMDSYAHTGKENPIKTGTNRGASGIDGIISTAAGFAEGHGQPLCLMIGDLAFLHDLNALSLINSLRVPIQLILLNNNGGGIFSFLPVSEFDDIFEPNFATPQNFSGRPAAAMFGLDYTAPLTNSEFRESLLSALNSNRSTIIEVVCSRSENVRLHRALQARLGLLATEAFFIP.

This sequence belongs to the TPP enzyme family. MenD subfamily. In terms of assembly, homodimer. It depends on Mg(2+) as a cofactor. Mn(2+) is required as a cofactor. The cofactor is thiamine diphosphate.

It catalyses the reaction isochorismate + 2-oxoglutarate + H(+) = 5-enolpyruvoyl-6-hydroxy-2-succinyl-cyclohex-3-ene-1-carboxylate + CO2. The protein operates within quinol/quinone metabolism; 1,4-dihydroxy-2-naphthoate biosynthesis; 1,4-dihydroxy-2-naphthoate from chorismate: step 2/7. Its pathway is quinol/quinone metabolism; menaquinone biosynthesis. Catalyzes the thiamine diphosphate-dependent decarboxylation of 2-oxoglutarate and the subsequent addition of the resulting succinic semialdehyde-thiamine pyrophosphate anion to isochorismate to yield 2-succinyl-5-enolpyruvyl-6-hydroxy-3-cyclohexene-1-carboxylate (SEPHCHC). The polypeptide is 2-succinyl-5-enolpyruvyl-6-hydroxy-3-cyclohexene-1-carboxylate synthase (Chlorobium phaeovibrioides (strain DSM 265 / 1930) (Prosthecochloris vibrioformis (strain DSM 265))).